We begin with the raw amino-acid sequence, 126 residues long: Glycine cleavage system H protein (126 aa).

The Lipoyl-binding domain maps to 22-104; sequence IAYVGITDYA…YGEGWLIKMK (83 aa). N6-lipoyllysine is present on Lys63.

Belongs to the GcvH family. As to quaternary structure, the glycine cleavage system is composed of four proteins: P, T, L and H. Requires (R)-lipoate as cofactor.

In terms of biological role, the glycine cleavage system catalyzes the degradation of glycine. The H protein shuttles the methylamine group of glycine from the P protein to the T protein. The sequence is that of Glycine cleavage system H protein from Bacteroides thetaiotaomicron (strain ATCC 29148 / DSM 2079 / JCM 5827 / CCUG 10774 / NCTC 10582 / VPI-5482 / E50).